Here is a 101-residue protein sequence, read N- to C-terminus: MSLKTSFDENIKQKHKIEKPKMYKVILHNDDYTTMEFVIEILINVFNKVPANAVKITFDVHKNGIGIAGVYPYDIAATKINEVKKLAYKNGYPLKLTMGEV.

The protein belongs to the ClpS family. In terms of assembly, binds to the N-terminal domain of the chaperone ClpA.

Involved in the modulation of the specificity of the ClpAP-mediated ATP-dependent protein degradation. This Clostridium acetobutylicum (strain ATCC 824 / DSM 792 / JCM 1419 / IAM 19013 / LMG 5710 / NBRC 13948 / NRRL B-527 / VKM B-1787 / 2291 / W) protein is ATP-dependent Clp protease adapter protein ClpS.